A 237-amino-acid polypeptide reads, in one-letter code: MEHKAPLVEFLGLTFNLSDMLMITITSLIVFIIAVAATRSLQLRPTGMQNFMEWVFDFVRGIINSTMDWQTGGRFLTLGVTLIMYVFVANMLGLPFSVHVNGELWWKSPTADATVTLTLAVMVVGLTHYYGVKMKGASDYLRDYTRPVAWLFPLKIIEEFANTLTLGLRLFGNIYAGEILLGLLASLGTHYGVLGAVGAAIPMMVWQAFSIFVGTIQAFIFTMLTMVYMAHKVSHDH.

The next 5 membrane-spanning stretches (helical) occupy residues 17–37, 75–95, 112–132, 179–201, and 214–234; these read LSDM…AVAA, FLTL…LGLP, DATV…YYGV, ILLG…GAAI, and GTIQ…HKVS.

This sequence belongs to the ATPase A chain family. In terms of assembly, F-type ATPases have 2 components, CF(1) - the catalytic core - and CF(0) - the membrane proton channel. CF(1) has five subunits: alpha(3), beta(3), gamma(1), delta(1), epsilon(1). CF(0) has three main subunits: a(1), b(2) and c(9-12). The alpha and beta chains form an alternating ring which encloses part of the gamma chain. CF(1) is attached to CF(0) by a central stalk formed by the gamma and epsilon chains, while a peripheral stalk is formed by the delta and b chains.

Its subcellular location is the cell membrane. Functionally, key component of the proton channel; it plays a direct role in the translocation of protons across the membrane. In Geobacillus kaustophilus (strain HTA426), this protein is ATP synthase subunit a.